Reading from the N-terminus, the 202-residue chain is MSFAREASRAIRSSFVLWVIAAVIYPFFMIAVGQIVFPHQANGSLVRDSRGQVLGSTLIGQPFTSDRYFNSRPSTTVYSTANPNKDDNLVLQTGISGASNLAPSNPQLIERIKDEDLNRLQTSGIQPTADLVYTSGSSLDPHITPEAARAQVSRIAKVRQLPPQQLETLITQNTDSRFLGIFGEPGVNVLQLNLALDELKPT.

Residues 17–37 traverse the membrane as a helical segment; sequence LWVIAAVIYPFFMIAVGQIVF.

The protein belongs to the KdpC family. The system is composed of three essential subunits: KdpA, KdpB and KdpC.

Its subcellular location is the cell inner membrane. Its function is as follows. Part of the high-affinity ATP-driven potassium transport (or Kdp) system, which catalyzes the hydrolysis of ATP coupled with the electrogenic transport of potassium into the cytoplasm. This subunit acts as a catalytic chaperone that increases the ATP-binding affinity of the ATP-hydrolyzing subunit KdpB by the formation of a transient KdpB/KdpC/ATP ternary complex. The sequence is that of Potassium-transporting ATPase KdpC subunit 1 from Nostoc sp. (strain PCC 7120 / SAG 25.82 / UTEX 2576).